A 207-amino-acid chain; its full sequence is Large ribosomal subunit protein uL4 (207 aa).

Residues 49–78 (HAVKNRSAVRGGGRKPWRQKGTGRARQGSI) form a disordered region. Basic residues predominate over residues 60–71 (GGRKPWRQKGTG).

This sequence belongs to the universal ribosomal protein uL4 family. As to quaternary structure, part of the 50S ribosomal subunit.

In terms of biological role, one of the primary rRNA binding proteins, this protein initially binds near the 5'-end of the 23S rRNA. It is important during the early stages of 50S assembly. It makes multiple contacts with different domains of the 23S rRNA in the assembled 50S subunit and ribosome. Its function is as follows. Forms part of the polypeptide exit tunnel. The sequence is that of Large ribosomal subunit protein uL4 from Enterococcus faecalis (strain ATCC 700802 / V583).